The following is a 61-amino-acid chain: Metallothionein-1 (61 aa).

The residue at position 1 (M1) is an N-acetylmethionine. A beta region spans residues 1–29 (MDPNCSCATGVSCTCADSCKCKECKCTSC). A divalent metal cation contacts are provided by C5, C7, C13, C15, C19, C21, C24, C26, C29, C33, C34, C36, C37, C41, C44, C48, C50, C57, C59, and C60. An alpha region spans residues 30 to 61 (KKSCCSCCPVGCAKCAQGCVCKGASEKCNCCA).

It belongs to the metallothionein superfamily. Type 1 family.

Metallothioneins have a high content of cysteine residues that bind various heavy metals; these proteins are transcriptionally regulated by both heavy metals and glucocorticoids. In Chlorocebus aethiops (Green monkey), this protein is Metallothionein-1 (MT1).